A 383-amino-acid polypeptide reads, in one-letter code: Interleukin-13 receptor subunit alpha-2 (383 aa).

A signal peptide spans 1–21 (MAFVHIRCLCFILLCTITGYS). The Extracellular segment spans residues 22–334 (LEIKVNPPQD…WEGYTGPDSK (313 aa)). Fibronectin type-III domains are found at residues 28–128 (PPQD…SDEG), 131–219 (ETKI…PIRS), and 234–332 (PPEF…TGPD). Residues Cys59 and Cys107 are joined by a disulfide bond. N-linked (GlcNAc...) asparagine glycosylation occurs at Asn109. A disulfide bridge connects residues Cys139 and Cys149. Asn162 carries N-linked (GlcNAc...) asparagine glycosylation. An intrachain disulfide couples Cys178 to Cys191. 2 N-linked (GlcNAc...) asparagine glycosylation sites follow: Asn209 and Asn293. Residues Cys263 and Cys310 are joined by a disulfide bond. A WSXWS motif motif is present at residues 316–320 (WSEWS). A helical membrane pass occupies residues 335 to 355 (IIFIVPVCLFFIFLLLLLCLI). Residues 356–383 (VEKEEPEPTLSLHVDLNKEVCAYEDTLC) lie on the Cytoplasmic side of the membrane.

This sequence belongs to the type I cytokine receptor family. Type 5 subfamily. As to quaternary structure, interacts with IL4RA. Interacts with high affinity to interleukin-13 (IL13), but not to interleukin-4 (IL4). Post-translationally, cleaved by MMP8 leading to a soluble form that is also able to interact with IL13.

The protein localises to the cell membrane. It is found in the secreted. Functionally, cell surface receptor that plays a role in the regulation of IL-13-mediated responses. Functions as a decoy receptor that inhibits IL-13- and IL-4-mediated signal transduction via the JAK-STAT pathway and thereby modulates immune responses and inflammation. Serves as a functional signaling receptor for IL-13 in an alternative pathway involving AP-1 ultimately leading to the production of TGFB1. The chain is Interleukin-13 receptor subunit alpha-2 (Il13ra2) from Mus musculus (Mouse).